The primary structure comprises 504 residues: Maturase K (504 aa).

It belongs to the intron maturase 2 family. MatK subfamily.

The protein localises to the plastid. The protein resides in the chloroplast. Its function is as follows. Usually encoded in the trnK tRNA gene intron. Probably assists in splicing its own and other chloroplast group II introns. In Arabidopsis lyrata (Lyre-leaved rock-cress), this protein is Maturase K.